The primary structure comprises 492 residues: UDP-N-acetylmuramoyl-L-alanyl-D-glutamate--2,6-diaminopimelate ligase (492 aa).

Ser-21 lines the UDP-N-acetyl-alpha-D-muramoyl-L-alanyl-D-glutamate pocket. 98–104 (GTNGKSS) is an ATP binding site. UDP-N-acetyl-alpha-D-muramoyl-L-alanyl-D-glutamate is bound by residues 144–145 (TT), Ser-171, Gln-177, and Arg-179. At Lys-211 the chain carries N6-carboxylysine. Meso-2,6-diaminopimelate-binding positions include Arg-372, 396 to 399 (DNPR), Gly-446, and Glu-450. Positions 396-399 (DNPR) match the Meso-diaminopimelate recognition motif motif.

This sequence belongs to the MurCDEF family. MurE subfamily. Mg(2+) serves as cofactor. Post-translationally, carboxylation is probably crucial for Mg(2+) binding and, consequently, for the gamma-phosphate positioning of ATP.

It localises to the cytoplasm. It catalyses the reaction UDP-N-acetyl-alpha-D-muramoyl-L-alanyl-D-glutamate + meso-2,6-diaminopimelate + ATP = UDP-N-acetyl-alpha-D-muramoyl-L-alanyl-gamma-D-glutamyl-meso-2,6-diaminopimelate + ADP + phosphate + H(+). The protein operates within cell wall biogenesis; peptidoglycan biosynthesis. Catalyzes the addition of meso-diaminopimelic acid to the nucleotide precursor UDP-N-acetylmuramoyl-L-alanyl-D-glutamate (UMAG) in the biosynthesis of bacterial cell-wall peptidoglycan. This Rickettsia typhi (strain ATCC VR-144 / Wilmington) protein is UDP-N-acetylmuramoyl-L-alanyl-D-glutamate--2,6-diaminopimelate ligase.